Reading from the N-terminus, the 260-residue chain is Zinc finger protein 575 (260 aa).

The disordered stretch occupies residues 22 to 81 (PGLGPGRWLLPGAHQPSCPPAPHQGPLQKPSQSAPGPTASASAPPRPRRRPPPQRPHRCP). A compositionally biased stretch (low complexity) spans 51 to 64 (PSQSAPGPTASASA). Over residues 67 to 78 (RPRRRPPPQRPH) the composition is skewed to basic residues. 6 C2H2-type zinc fingers span residues 78 to 100 (HRCP…RLAH), 106 to 128 (HPCP…RLTH), 134 to 156 (HPCP…LWTH), 162 to 184 (YPCP…RHTH), 192 to 214 (YPCP…RLCH), and 228 to 255 (HRCS…QVEH).

It belongs to the krueppel C2H2-type zinc-finger protein family.

Its subcellular location is the nucleus. Functionally, may be involved in transcriptional regulation. This chain is Zinc finger protein 575 (ZNF575), found in Macaca fascicularis (Crab-eating macaque).